Here is a 172-residue protein sequence, read N- to C-terminus: Dual-action ribosomal maturation protein DarP (172 aa).

Belongs to the DarP family.

It localises to the cytoplasm. Member of a network of 50S ribosomal subunit biogenesis factors which assembles along the 30S-50S interface, preventing incorrect 23S rRNA structures from forming. Promotes peptidyl transferase center (PTC) maturation. The protein is Dual-action ribosomal maturation protein DarP of Ectopseudomonas mendocina (strain ymp) (Pseudomonas mendocina).